Consider the following 158-residue polypeptide: 2-C-methyl-D-erythritol 2,4-cyclodiphosphate synthase (158 aa).

2 residues coordinate a divalent metal cation: D9 and H11. 4-CDP-2-C-methyl-D-erythritol 2-phosphate is bound by residues 9-11 (DVH) and 35-36 (HS). Residue H43 coordinates a divalent metal cation. 4-CDP-2-C-methyl-D-erythritol 2-phosphate is bound by residues 57–59 (DIG), 62–66 (FPDTD), 101–107 (AQKPKMA), 133–136 (TTTE), F140, and R143.

Belongs to the IspF family. In terms of assembly, homotrimer. It depends on a divalent metal cation as a cofactor.

The enzyme catalyses 4-CDP-2-C-methyl-D-erythritol 2-phosphate = 2-C-methyl-D-erythritol 2,4-cyclic diphosphate + CMP. Its pathway is isoprenoid biosynthesis; isopentenyl diphosphate biosynthesis via DXP pathway; isopentenyl diphosphate from 1-deoxy-D-xylulose 5-phosphate: step 4/6. Functionally, involved in the biosynthesis of isopentenyl diphosphate (IPP) and dimethylallyl diphosphate (DMAPP), two major building blocks of isoprenoid compounds. Catalyzes the conversion of 4-diphosphocytidyl-2-C-methyl-D-erythritol 2-phosphate (CDP-ME2P) to 2-C-methyl-D-erythritol 2,4-cyclodiphosphate (ME-CPP) with a corresponding release of cytidine 5-monophosphate (CMP). The protein is 2-C-methyl-D-erythritol 2,4-cyclodiphosphate synthase of Bacillus cytotoxicus (strain DSM 22905 / CIP 110041 / 391-98 / NVH 391-98).